Consider the following 248-residue polypeptide: MKNTLKLPLLIGVAGGTSCGKSTIVERIIENLNANAKQSGRQIDIVHLSLHSFYRELSAEEKILAREGKFNFDHPDQINFDLLAETLQNMIDGKTVEIPKYDMITSSMNGTVTVEPAKVIIIEGILLLYDERVRKLLSTKLFVEKNAESRLRNRLATYIRDYHRAPLSIIRQYTEFVKPAFEEFCRPTKKYADVIIPRGADNHVATDLIAKNLQETFRKIVVSSDEEEEKENELVKQGSFRRPFSRPH.

15–23 is a binding site for ATP; sequence GGTSCGKST. The substrate site is built by aspartate 73, tyrosine 101, arginine 154, arginine 164, and glutamine 172. Position 201 (aspartate 201) interacts with ATP. The interval 224–248 is disordered; sequence SDEEEEKENELVKQGSFRRPFSRPH.

It belongs to the uridine kinase family.

It carries out the reaction uridine + ATP = UMP + ADP + H(+). The catalysed reaction is cytidine + ATP = CMP + ADP + H(+). The protein operates within pyrimidine metabolism; CTP biosynthesis via salvage pathway; CTP from cytidine: step 1/3. It functions in the pathway pyrimidine metabolism; UMP biosynthesis via salvage pathway; UMP from uridine: step 1/1. This chain is Probable uridine-cytidine kinase, found in Caenorhabditis elegans.